A 255-amino-acid polypeptide reads, in one-letter code: tRNA uridine(34) hydroxylase (255 aa).

Residues 131–225 (AAPDTLVLDT…YLEEVPEAQS (95 aa)) form the Rhodanese domain. The Cysteine persulfide intermediate role is filled by Cys-185.

Belongs to the TrhO family.

The catalysed reaction is uridine(34) in tRNA + AH2 + O2 = 5-hydroxyuridine(34) in tRNA + A + H2O. Its function is as follows. Catalyzes oxygen-dependent 5-hydroxyuridine (ho5U) modification at position 34 in tRNAs. The chain is tRNA uridine(34) hydroxylase from Bradyrhizobium diazoefficiens (strain JCM 10833 / BCRC 13528 / IAM 13628 / NBRC 14792 / USDA 110).